A 135-amino-acid chain; its full sequence is MMLSPDQAADSDHPSSTHSDPESLGGADTKVLGSVSDLEPVEEADGDGKGGSRAALYPHPQQLSREEKRRRRRATAKYRSAHATRERIRVEAFNLAFAELRKLLPTLPPDKKLSKIEILRLAICYISYLNHVLDV.

The tract at residues 1–81 (MMLSPDQAAD…RRATAKYRSA (81 aa)) is disordered. Residues 10–21 (DSDHPSSTHSDP) are compositionally biased toward basic and acidic residues. Positions 68 to 81 (KRRRRRATAKYRSA) are enriched in basic residues. The bHLH domain occupies 77–129 (KYRSAHATRERIRVEAFNLAFAELRKLLPTLPPDKKLSKIEILRLAICYISYL).

As to quaternary structure, homodimer. Interacts and may form heterodimers with STAT3. Expressed in developing neurons. Transiently expressed in the cerebellum during postnatal development, exclusively in the premigratory zone of the external granule layer where postmitotic neurons undergo initial stages of neuronal differentiation. Expression is not detected in mature neurons. Expressed in the anterior lobe of the adult pituitary.

The protein resides in the nucleus. In terms of biological role, transcription factor which binds the E box motif 5'-CA[TC][AG]TG-3'. Involved in regulating energy expenditure, body mass, voluntary physical activity, mating behavior and reproductive longevity, acting through the hypothalamic-pituitary-gonadal axis. Acts as a transcriptional activator of target genes, including Ndn, Pcsk1, Mc4r. Is also a transcriptional activator of KISS1. May act centrally to regulate function of both white and brown adipose tissue. Together with NHLH1, required to maintain migration and survival of cells in the anterior extramural migration stream (aes), which forms the precerebellar nuclei. Also, in concert with Nhlh1, may determine fate of gonadotropin releasing hormone-1 (GnRH-1) neurons. The chain is Helix-loop-helix protein 2 (Nhlh2) from Mus musculus (Mouse).